The sequence spans 1295 residues: DNA-directed RNA polymerase subunit beta' (1295 aa).

Zn(2+) is bound by residues Cys60, Cys62, Cys75, and Cys78. 3 residues coordinate Mg(2+): Asp516, Asp518, and Asp520. Positions 841, 914, 921, and 924 each coordinate Zn(2+).

This sequence belongs to the RNA polymerase beta' chain family. In terms of assembly, the RNAP catalytic core consists of 2 alpha, 1 beta, 1 beta' and 1 omega subunit. When a sigma factor is associated with the core the holoenzyme is formed, which can initiate transcription. Requires Mg(2+) as cofactor. Zn(2+) serves as cofactor.

The catalysed reaction is RNA(n) + a ribonucleoside 5'-triphosphate = RNA(n+1) + diphosphate. Functionally, DNA-dependent RNA polymerase catalyzes the transcription of DNA into RNA using the four ribonucleoside triphosphates as substrates. The sequence is that of DNA-directed RNA polymerase subunit beta' from Dehalococcoides mccartyi (strain ATCC BAA-2100 / JCM 16839 / KCTC 5957 / BAV1).